We begin with the raw amino-acid sequence, 130 residues long: MNDPIGDMLTRIRNSQMRGKSTVMTPASKLRAWVLDVLQSEGYIRGYESATDERGHPALEISLKYYEGEPVIRELKRVSKPGRRVYMGVNDIPSVRQGLGVSIVSTPKGVMSDANARAANVGGEVLCTVF.

This sequence belongs to the universal ribosomal protein uS8 family. Part of the 30S ribosomal subunit. Contacts proteins S5 and S12.

Functionally, one of the primary rRNA binding proteins, it binds directly to 16S rRNA central domain where it helps coordinate assembly of the platform of the 30S subunit. This is Small ribosomal subunit protein uS8 from Ruegeria sp. (strain TM1040) (Silicibacter sp.).